A 320-amino-acid chain; its full sequence is MQARLLIPILFSVFILSACGTLTGIPSHGGGKRFAVEQELVAASARAAVKDMDLQALHGRKVALYIATMGDQGSGSLTGGRYSIDALIRGEYINSPAVRTDYTYPRYETTAETTSGGLTGLTTSLSTLNAPALSRTQSDGSGSKSSLGLNIGGMGDYRNETLTTNPRDTAFLSHLVQTVFFLRGIDVVSPANADTDVFINIDVFGTIRNRTEMHLYNAETLKAQTKLEYFAVDRTNKKLLIKPKTNAFEAAYKENYALWMGPYKVSKGIKPTEGLMVDFSDIRPYGNHTGNSAPSVETDNSHEGYGYSDEVVRQHRQGQP.

Residues 1–18 (MQARLLIPILFSVFILSA) form the signal peptide. Cysteine 19 carries N-palmitoyl cysteine lipidation. Cysteine 19 is lipidated: S-diacylglycerol cysteine. The segment covering 288–298 (HTGNSAPSVET) has biased composition (polar residues). Residues 288–320 (HTGNSAPSVETDNSHEGYGYSDEVVRQHRQGQP) form a disordered region.

This sequence belongs to the MafA family.

The protein localises to the cell outer membrane. This is Adhesin MafA 3 (mafA3) from Neisseria meningitidis serogroup C / serotype 2a (strain ATCC 700532 / DSM 15464 / FAM18).